Reading from the N-terminus, the 89-residue chain is Small ribosomal subunit protein uS15 (89 aa).

Belongs to the universal ribosomal protein uS15 family. Part of the 30S ribosomal subunit. Forms a bridge to the 50S subunit in the 70S ribosome, contacting the 23S rRNA.

Functionally, one of the primary rRNA binding proteins, it binds directly to 16S rRNA where it helps nucleate assembly of the platform of the 30S subunit by binding and bridging several RNA helices of the 16S rRNA. Its function is as follows. Forms an intersubunit bridge (bridge B4) with the 23S rRNA of the 50S subunit in the ribosome. This chain is Small ribosomal subunit protein uS15, found in Chlorobium limicola (strain DSM 245 / NBRC 103803 / 6330).